The primary structure comprises 309 residues: Phytoene synthase (309 aa).

This sequence belongs to the phytoene/squalene synthase family.

It carries out the reaction 2 (2E,6E,10E)-geranylgeranyl diphosphate = 15-cis-phytoene + 2 diphosphate. Its pathway is carotenoid biosynthesis; phytoene biosynthesis; all-trans-phytoene from geranylgeranyl diphosphate: step 1/1. In terms of biological role, catalyzes the reaction from prephytoene diphosphate to phytoene. The chain is Phytoene synthase (crtB) from Arthrospira platensis (Spirulina platensis).